Reading from the N-terminus, the 540-residue chain is Probable protein kinase UbiB (540 aa).

The chain crosses the membrane as a helical span at residues 24 to 44 (LLFEQPLLPWWLASLRLLMPW). The 369-residue stretch at 126-494 (RFDVEPLASA…RRRQGDRWAL (369 aa)) folds into the Protein kinase domain. Residues 132 to 140 (LASASVAQV) and K154 each bind ATP. D289 acts as the Proton acceptor in catalysis. Transmembrane regions (helical) follow at residues 496–516 (LLGAGLLGGGAVLAAGAAEAA) and 518–538 (LAAPAAWPAWLMLAAGLYLIV).

The protein belongs to the ABC1 family. UbiB subfamily.

The protein resides in the cell inner membrane. The protein operates within cofactor biosynthesis; ubiquinone biosynthesis [regulation]. Its function is as follows. Is probably a protein kinase regulator of UbiI activity which is involved in aerobic coenzyme Q (ubiquinone) biosynthesis. In Pseudomonas putida (strain GB-1), this protein is Probable protein kinase UbiB.